The following is a 796-amino-acid chain: Protein U58 (796 aa).

The protein belongs to the herpesviridae UL87 family.

The chain is Protein U58 from Elephas maximus (Indian elephant).